Here is a 432-residue protein sequence, read N- to C-terminus: Cyclic GMP-AMP synthase (432 aa).

110 to 115 (QGSFQY) contributes to the GTP binding site. 2 residues coordinate Mg(2+): D129 and D131. Position 180 (R180) interacts with ATP. D191 is a binding site for Mg(2+). S255 is a binding site for ATP. GTP-binding residues include K283, S297, and D344. Positions 413–432 (LNAPSKEPSSKPINKTMVSG) are disordered. Residues 423 to 432 (KPINKTMVSG) show a composition bias toward polar residues.

This sequence belongs to the CD-NTase family. A01 subfamily. Mg(2+) serves as cofactor.

The enzyme catalyses GTP + ATP = 3',3'-cGAMP + 2 diphosphate. In terms of biological role, cyclic nucleotide synthase (second messenger synthase) of a CBASS antivirus system. CBASS (cyclic oligonucleotide-based antiphage signaling system) provides immunity against bacteriophage. The CD-NTase protein synthesizes cyclic nucleotides in response to infection; these serve as specific second messenger signals. The signals activate a diverse range of effectors, leading to bacterial cell death and thus abortive phage infection. A type II-C(GA) CBASS system. Its function is as follows. Catalyzes the synthesis of 3'3'-cyclic GMP-AMP (3'3'-cGAMP) from GTP and ATP, a second messenger in cell signal transduction. Is also able to produce c-di-AMP and c-di-GMP from ATP and GTP, respectively; however, 3'3'-cGAMP is the dominant molecule produced by DncV in vivo, contrary to the 2'3'-cGAMP produced by eukaryotes. By producing cGAMP, down-regulates csgD expression and expression of flagellum regulon genes, which leads to the down-regulation of rdar biofilm formation and flagellum-mediated swimming and swarming motility in a temperature-dependent manner. Controls the activity of cGAMP-activated phospholipase CapV, a patatin-like lipase that is a direct 3',3'-cGAMP receptor encoded in the dncV operon. In Escherichia coli, this protein is Cyclic GMP-AMP synthase.